The primary structure comprises 79 residues: U-scoloptoxin(15)-Sm1a (79 aa).

An N-terminal signal peptide occupies residues 1–25 (MKMNVVVLSVVVLLLFIANIQQTEA).

This sequence belongs to the scoloptoxin-15 family. Contains 2 disulfide bonds. In terms of tissue distribution, expressed by the venom gland.

The protein localises to the secreted. The polypeptide is U-scoloptoxin(15)-Sm1a (Scolopendra morsitans (Tanzanian blue ringleg centipede)).